The primary structure comprises 125 residues: Large ribosomal subunit protein bL20 (125 aa).

Belongs to the bacterial ribosomal protein bL20 family.

Binds directly to 23S ribosomal RNA and is necessary for the in vitro assembly process of the 50S ribosomal subunit. It is not involved in the protein synthesizing functions of that subunit. The protein is Large ribosomal subunit protein bL20 of Thermobifida fusca (strain YX).